Reading from the N-terminus, the 497-residue chain is Putative glucuronosyltransferase PGSIP8 (497 aa).

The chain crosses the membrane as a helical span at residues 3–23 (LQRGFVFLSLVLSFMIIETTA). Mn(2+)-binding residues include D165 and D167. 5 consecutive transmembrane segments (helical) span residues 319–339 (YSAEMPLVIIQAMFYLGIIVV), 365–385 (GFKLIALLSVVAAYIFPFFTI), 388–408 (TIHPLIGWSLYLMASFALSSI), 418–438 (LPVLTPWLGILGTLLVMAFPW), and 442–462 (GVVRALSVFAYAFCCAPFVWV).

The protein belongs to the glycosyltransferase 8 family. Glycogenin subfamily. It depends on Mn(2+) as a cofactor.

It localises to the membrane. This Arabidopsis thaliana (Mouse-ear cress) protein is Putative glucuronosyltransferase PGSIP8 (PGSIP8).